A 305-amino-acid chain; its full sequence is tRNA dimethylallyltransferase (305 aa).

11–18 is a binding site for ATP; the sequence is GPTAVGKT. 13–18 lines the substrate pocket; the sequence is TAVGKT. The segment at 36–39 is interaction with substrate tRNA; that stretch reads DSMQ.

Belongs to the IPP transferase family. As to quaternary structure, monomer. The cofactor is Mg(2+).

It carries out the reaction adenosine(37) in tRNA + dimethylallyl diphosphate = N(6)-dimethylallyladenosine(37) in tRNA + diphosphate. Catalyzes the transfer of a dimethylallyl group onto the adenine at position 37 in tRNAs that read codons beginning with uridine, leading to the formation of N6-(dimethylallyl)adenosine (i(6)A). The chain is tRNA dimethylallyltransferase from Listeria monocytogenes serotype 4a (strain HCC23).